Consider the following 187-residue polypeptide: Transmembrane protein 212 (187 aa).

5 helical membrane-spanning segments follow: residues 11–31 (TLVT…FPVF), 42–62 (VWIA…SLVL), 76–96 (AVFT…TVAL), 106–126 (FYSF…TFPF), and 148–168 (LQVL…AVFI).

It is found in the membrane. The sequence is that of Transmembrane protein 212 (Tmem212) from Mus musculus (Mouse).